The primary structure comprises 123 residues: Small ribosomal subunit protein uS12c (123 aa).

The span at 1 to 16 (MPTIQQLIRNSRQPAE) shows a compositional bias: polar residues. Positions 1–23 (MPTIQQLIRNSRQPAENRTKSPA) are disordered.

It belongs to the universal ribosomal protein uS12 family. In terms of assembly, part of the 30S ribosomal subunit.

It is found in the plastid. Its subcellular location is the chloroplast. Functionally, with S4 and S5 plays an important role in translational accuracy. Located at the interface of the 30S and 50S subunits. The sequence is that of Small ribosomal subunit protein uS12c (rps12) from Staurastrum punctulatum (Green alga).